The primary structure comprises 1072 residues: Zinc finger MIZ domain-containing protein 1 (1072 aa).

The interval 1–120 is sufficient for transactivation activity; sufficient for interaction with NOTCH1; sequence MNSMDRHIQQ…HQKSRQNDPP (120 aa). Residue Lys91 forms a Glycyl lysine isopeptide (Lys-Gly) (interchain with G-Cter in SUMO2) linkage. 2 disordered regions span residues 112–141 and 362–538; these read QKSR…TLSH and TPSG…PYLS. The span at 128–141 shows a compositional bias: low complexity; the sequence is PLSSMSSMKPTLSH. A compositionally biased stretch (polar residues) spans 419-436; sequence YGNQQYGPNSQFPTQPGQ. Residues 437–446 show a composition bias toward pro residues; sequence YPTPNPPRPL. The span at 489 to 501 shows a compositional bias: low complexity; it reads SSGSSYSSYSQGS. Over residues 517-528 the composition is skewed to pro residues; it reads SPVPGNPTPPMT. Residues 734-815 form an SP-RING-type zinc finger; sequence GEDGVEQTAI…MWGILNAIQH (82 aa). Zn(2+) contacts are provided by Cys765, His767, Cys788, and Cys791. Residues Lys841 and Lys850 each participate in a glycyl lysine isopeptide (Lys-Gly) (interchain with G-Cter in SUMO2) cross-link. Residues 844 to 1072 are transactivation domain; it reads PDGIPSKRFK…DDLLSLFENN (229 aa). Over residues 875–886 the composition is skewed to pro residues; it reads GPSPYPLPPPPG. Residues 875 to 1072 are disordered; the sequence is GPSPYPLPPP…DDLLSLFENN (198 aa). Polar residues-rich tracts occupy residues 888-902 and 958-968; these read TSSN…NYQG and SSDQPHPSIQQ. Residues 988–1001 are compositionally biased toward pro residues; it reads APPPSQPPRQPPQA. Positions 1045-1072 are enriched in low complexity; the sequence is PDELLSYLDPPDLPSNSNDDLLSLFENN.

Interacts with AR, but not with ESR1, NR3C1, PGR, THRB nor VDR. Interacts with NOTCH1 and RBPJ. Interacts with SMARCA4. Interacts (via SP-RING-type domain) with SMAD3 and SMAD4 (via MH2 domain). As to expression, expressed in brain.

The protein resides in the nucleus. It localises to the nucleoplasm. It is found in the cytoplasm. Its function is as follows. Acts as a transcriptional coactivator. Increases ligand-dependent transcriptional activity of AR and promotes AR sumoylation. The stimulation of AR activity is dependent upon sumoylation. Also functions as a transcriptional coactivator in the TGF-beta signaling pathway by increasing the activity of the SMAD3/SMAD4 transcriptional complex. Involved in transcriptional activation of a subset of NOTCH1 target genes including MYC. Involved in thymocyte and T cell development. Involved in the regulation of postmitotic positioning of pyramidal neurons in the developing cerebral cortex. In Mus musculus (Mouse), this protein is Zinc finger MIZ domain-containing protein 1 (Zmiz1).